Reading from the N-terminus, the 287-residue chain is Uroplakin-3a (287 aa).

The signal sequence occupies residues methionine 1–threonine 18. Topologically, residues valine 19 to glycine 207 are lumenal. N-linked (GlcNAc...) asparagine glycans are attached at residues asparagine 74, asparagine 139, and asparagine 170. The chain crosses the membrane as a helical span at residues methionine 208–valine 235. Residues aspartate 236–aspartate 287 lie on the Cytoplasmic side of the membrane. The disordered stretch occupies residues glutamate 243–aspartate 287. Residues leucine 259–asparagine 270 are compositionally biased toward polar residues.

It belongs to the uroplakin-3 family. As to quaternary structure, heterodimer with uroplakin-1B (UPK1B).

Its subcellular location is the endoplasmic reticulum membrane. Functionally, component of the asymmetric unit membrane (AUM); a highly specialized biomembrane elaborated by terminally differentiated urothelial cells. May play an important role in AUM-cytoskeleton interaction in terminally differentiated urothelial cells. It also contributes to the formation of urothelial glycocalyx which may play an important role in preventing bacterial adherence. This is Uroplakin-3a (Upk3a) from Mus musculus (Mouse).